The sequence spans 326 residues: Beta-ketoacyl-[acyl-carrier-protein] synthase III (326 aa).

Residues Cys-120 and His-253 contribute to the active site. The segment at 254-258 (QANIR) is ACP-binding. The active site involves Asn-283.

Belongs to the thiolase-like superfamily. FabH family. In terms of assembly, homodimer.

It is found in the cytoplasm. It carries out the reaction malonyl-[ACP] + acetyl-CoA + H(+) = 3-oxobutanoyl-[ACP] + CO2 + CoA. It functions in the pathway lipid metabolism; fatty acid biosynthesis. In terms of biological role, catalyzes the condensation reaction of fatty acid synthesis by the addition to an acyl acceptor of two carbons from malonyl-ACP. Catalyzes the first condensation reaction which initiates fatty acid synthesis and may therefore play a role in governing the total rate of fatty acid production. Possesses both acetoacetyl-ACP synthase and acetyl transacylase activities. Its substrate specificity determines the biosynthesis of branched-chain and/or straight-chain of fatty acids. This chain is Beta-ketoacyl-[acyl-carrier-protein] synthase III, found in Cupriavidus taiwanensis (strain DSM 17343 / BCRC 17206 / CCUG 44338 / CIP 107171 / LMG 19424 / R1) (Ralstonia taiwanensis (strain LMG 19424)).